The following is a 128-amino-acid chain: Small ribosomal subunit protein bS6 (128 aa).

This sequence belongs to the bacterial ribosomal protein bS6 family.

Functionally, binds together with bS18 to 16S ribosomal RNA. This is Small ribosomal subunit protein bS6 from Leifsonia xyli subsp. xyli (strain CTCB07).